The sequence spans 270 residues: Phosphatidylglycerol--prolipoprotein diacylglyceryl transferase (270 aa).

Helical transmembrane passes span 10–30 (VAVA…LVGI), 56–76 (LIFW…VLFY), 92–112 (WKGG…AWWF), 120–140 (FFQL…AGRI), 175–195 (SQLY…NLYA), 202–222 (MAVS…VEFV), and 237–257 (VTMG…LIWL). Arg139 contributes to the a 1,2-diacyl-sn-glycero-3-phospho-(1'-sn-glycerol) binding site.

It belongs to the Lgt family.

It localises to the cell inner membrane. It carries out the reaction L-cysteinyl-[prolipoprotein] + a 1,2-diacyl-sn-glycero-3-phospho-(1'-sn-glycerol) = an S-1,2-diacyl-sn-glyceryl-L-cysteinyl-[prolipoprotein] + sn-glycerol 1-phosphate + H(+). It participates in protein modification; lipoprotein biosynthesis (diacylglyceryl transfer). Catalyzes the transfer of the diacylglyceryl group from phosphatidylglycerol to the sulfhydryl group of the N-terminal cysteine of a prolipoprotein, the first step in the formation of mature lipoproteins. The protein is Phosphatidylglycerol--prolipoprotein diacylglyceryl transferase of Pseudomonas syringae pv. tomato (strain ATCC BAA-871 / DC3000).